Here is a 478-residue protein sequence, read N- to C-terminus: Sedoheptulokinase (478 aa).

The protein belongs to the FGGY kinase family. As to expression, strongly expressed in liver, kidney and pancreas. Expressed at lower levels in placenta and heart. Very weakly expressed in lung and brain.

It is found in the cytoplasm. It catalyses the reaction sedoheptulose + ATP = D-sedoheptulose 7-phosphate + ADP + H(+). Functionally, acts as a modulator of macrophage activation through control of glucose metabolism. The sequence is that of Sedoheptulokinase from Homo sapiens (Human).